A 240-amino-acid polypeptide reads, in one-letter code: Eukaryotic translation initiation factor 4E-2 (240 aa).

The segment at Met-1–Glu-29 is disordered. Polar residues predominate over residues Ile-17–Ser-26. 2 EIF4G-binding regions span residues His-65–Gln-68 and Phe-75–His-111. Residues Asn-83–Gly-88, Lys-115, and Trp-133–Glu-134 each bind mRNA. A disulfide bridge connects residues Cys-138 and Cys-176. The segment at Asn-159–Gln-168 is EIF4G-binding. MRNA-binding positions include Arg-183–Arg-188 and Lys-228–Arg-232.

Belongs to the eukaryotic initiation factor 4E family. In terms of assembly, EIF4F is a multi-subunit complex, the composition of which varies with external and internal environmental conditions. It is composed of at least EIF4A, EIF4E and EIF4G. EIF4E is also known to interact with other partners. In higher plants two isoforms of EIF4F have been identified, named isoform EIF4F and isoform EIF(iso)4F. Isoform EIF4F has subunits p220 and p26, whereas isoform EIF(iso)4F has subunits p82 and p28. Post-translationally, according to the redox status, the Cys-138-Cys-176 disulfide bridge may have a role in regulating protein function by affecting its ability to bind capped mRNA.

It localises to the nucleus. The protein localises to the cytoplasm. Its function is as follows. Component of the protein complex eIF4F, which is involved in the recognition of the mRNA cap, ATP-dependent unwinding of 5'-terminal secondary structure and recruitment of mRNA to the ribosome. Recognizes and binds the 7-methylguanosine-containing mRNA cap during an early step in the initiation of protein synthesis and facilitates ribosome binding by inducing the unwinding of the mRNAs secondary structures. This Arabidopsis thaliana (Mouse-ear cress) protein is Eukaryotic translation initiation factor 4E-2.